The sequence spans 378 residues: MKFFTALAAVGALLAPAVALPTPASEASHNQTLSVRLVRAGHTMVRAIVTNNGERPLHLLSFNTIMDENPTSKVDVSHEDGGEVEFLGMLPRYDLSDLTEDLFTRLAPKDSVEHLFDIATVHDLKWDGKYTLTARGAIPVAEDGGTDIIDHVYYESNALEMDIDARKAAMVPRAFDDYFSKGLDKRRPLDICNPMKEKALRAALQDAQKVATEAAAAAQNNTEKVFEFFRARDPGTRKEVSKRLASISGVATMDGGSVTWFCSDGPRRCSPRIIAYTFPARNEVHPCSLFWQLPHRTNECHRQDRIGTVIHEGAHNPNAVTPHCKDHGYGYNRATALSHQRAMGNADNYALFANARQLVFCLLHLFLALPFIYIFANF.

The signal sequence occupies residues 1 to 19 (MKFFTALAAVGALLAPAVA). The propeptide occupies 20 to 186 (LPTPASEASH…DYFSKGLDKR (167 aa)). Intrachain disulfides connect cysteine 192–cysteine 262 and cysteine 269–cysteine 287. Histidine 311 is a Zn(2+) binding site. The active site involves glutamate 312. Positions 315 and 326 each coordinate Zn(2+).

The protein belongs to the peptidase M35 family. Requires Zn(2+) as cofactor.

The protein resides in the secreted. The enzyme catalyses Preferential cleavage of bonds with hydrophobic residues in P1'. Also 3-Asn-|-Gln-4 and 8-Gly-|-Ser-9 bonds in insulin B chain.. In terms of biological role, secreted metalloproteinase that allows assimilation of proteinaceous substrates. Shows high activities on basic nuclear substrates such as histone and protamine. May be involved in virulence. This Arthroderma benhamiae (strain ATCC MYA-4681 / CBS 112371) (Trichophyton mentagrophytes) protein is Neutral protease 2 homolog ARB_04336.